Here is a 251-residue protein sequence, read N- to C-terminus: Ubiquinone biosynthesis O-methyltransferase (251 aa).

Residues Arg36, Gly61, Asp82, and Ile124 each coordinate S-adenosyl-L-methionine.

The protein belongs to the methyltransferase superfamily. UbiG/COQ3 family.

It catalyses the reaction a 3-demethylubiquinol + S-adenosyl-L-methionine = a ubiquinol + S-adenosyl-L-homocysteine + H(+). It carries out the reaction a 3-(all-trans-polyprenyl)benzene-1,2-diol + S-adenosyl-L-methionine = a 2-methoxy-6-(all-trans-polyprenyl)phenol + S-adenosyl-L-homocysteine + H(+). Its pathway is cofactor biosynthesis; ubiquinone biosynthesis. O-methyltransferase that catalyzes the 2 O-methylation steps in the ubiquinone biosynthetic pathway. The sequence is that of Ubiquinone biosynthesis O-methyltransferase from Rickettsia akari (strain Hartford).